Consider the following 265-residue polypeptide: Undecaprenyl-diphosphatase 1 (265 aa).

Transmembrane regions (helical) follow at residues 4–24 (IITA…PISS), 42–62 (AKTF…ILYH), 84–104 (FHVF…HDII), 108–128 (LFQP…MIFA), 184–204 (SEFS…LDLL), 217–237 (MFAV…VTFL), and 245–265 (LKPF…FVLL).

Belongs to the UppP family.

The protein resides in the cell membrane. The enzyme catalyses di-trans,octa-cis-undecaprenyl diphosphate + H2O = di-trans,octa-cis-undecaprenyl phosphate + phosphate + H(+). In terms of biological role, catalyzes the dephosphorylation of undecaprenyl diphosphate (UPP). Confers resistance to bacitracin. The sequence is that of Undecaprenyl-diphosphatase 1 from Bacillus thuringiensis subsp. konkukian (strain 97-27).